We begin with the raw amino-acid sequence, 306 residues long: Pseudouridine-5'-phosphate glycosidase (306 aa).

E27 functions as the Proton donor in the catalytic mechanism. Substrate-binding residues include K88 and V108. Position 140 (D140) interacts with Mn(2+). 142–144 (SAD) is a binding site for substrate. Catalysis depends on K161, which acts as the Nucleophile.

Belongs to the pseudouridine-5'-phosphate glycosidase family. Homotrimer. It depends on Mn(2+) as a cofactor.

The catalysed reaction is D-ribose 5-phosphate + uracil = psi-UMP + H2O. Functionally, catalyzes the reversible cleavage of pseudouridine 5'-phosphate (PsiMP) to ribose 5-phosphate and uracil. Functions biologically in the cleavage direction, as part of a pseudouridine degradation pathway. The sequence is that of Pseudouridine-5'-phosphate glycosidase from Petrotoga mobilis (strain DSM 10674 / SJ95).